A 246-amino-acid polypeptide reads, in one-letter code: MYNLCYIQNLLEYQIAAVEVGQHLYWEIGNFEVHAQVLITSWIVIGLILGLTFLATQNLQFIPTQNQNLIEYILEFIRDLTKSQIGESEYRPWIPFIGTMFLFIFVSNWSGALIPFKLVQLPNGELAAPTNDINTTVALALLTSVAYFYAGLRKKGLSYFGKYIKPTPILLPINILEDFTKPLSLSFRLFGNILADELVVAVLVSLVPLVVPIPMMFLGLFTSAIQALIFATLAAAYIGESIEDHH.

Transmembrane regions (helical) follow at residues 35-55 (AQVL…TFLA), 94-114 (IPFI…GALI), 132-152 (DINT…YAGL), 198-218 (LVVA…MMFL), and 219-239 (GLFT…AYIG).

It belongs to the ATPase A chain family. As to quaternary structure, F-type ATPases have 2 components, CF(1) - the catalytic core - and CF(0) - the membrane proton channel. CF(1) has five subunits: alpha(3), beta(3), gamma(1), delta(1), epsilon(1). CF(0) has four main subunits: a, b, b' and c.

It localises to the plastid. It is found in the chloroplast thylakoid membrane. In terms of biological role, key component of the proton channel; it plays a direct role in the translocation of protons across the membrane. The protein is ATP synthase subunit a, chloroplastic of Chara vulgaris (Common stonewort).